Reading from the N-terminus, the 88-residue chain is Small ribosomal subunit protein bS20 (88 aa).

Residues 1–23 (MPNTKSAEKALRVADANRQENRR) show a composition bias toward basic and acidic residues. 2 disordered regions span residues 1–28 (MPNT…KSQV) and 69–88 (PKNA…QAAK). The segment covering 71–81 (NAARRKSRLMK) has biased composition (basic residues).

It belongs to the bacterial ribosomal protein bS20 family.

Binds directly to 16S ribosomal RNA. The polypeptide is Small ribosomal subunit protein bS20 (Dehalococcoides mccartyi (strain ATCC BAA-2266 / KCTC 15142 / 195) (Dehalococcoides ethenogenes (strain 195))).